Reading from the N-terminus, the 354-residue chain is MLKNDRLLRALRRQPVDRTPVWLMRQAGRYLPEYRATRARAGSFLGMAKNPDIACEVTLQPLERFPLDAAILFSDILTIPDAMGLELYFVEGEGPKFRHPVRDADAIHRLGVPDMETELRYVMDAVRLIRRELDGAVPLIGFSGSPWTLACYMIEGGGSKEYARIKAMAFNAPQLLHHLLSTVTDAVIAYLSAQRAAGAQALQVFDTWGGVLSPAMYREFSLPYLTRIAQELERGSGEERTPLVLFGKGNGAYVSELAASGAEAVGVDWTISLADAAERAGGRVALQGNLDPATLYGSPDAIRSEVGKTLDSYAYGNGGSREGHVFNLGHGMSPDMNPDHVGVLVEAVQTLSKR.

Substrate-binding positions include 25–29 (RQAGR), Asp-75, Tyr-152, Thr-207, and His-330.

This sequence belongs to the uroporphyrinogen decarboxylase family. Homodimer.

Its subcellular location is the cytoplasm. The enzyme catalyses uroporphyrinogen III + 4 H(+) = coproporphyrinogen III + 4 CO2. It functions in the pathway porphyrin-containing compound metabolism; protoporphyrin-IX biosynthesis; coproporphyrinogen-III from 5-aminolevulinate: step 4/4. Functionally, catalyzes the decarboxylation of four acetate groups of uroporphyrinogen-III to yield coproporphyrinogen-III. This is Uroporphyrinogen decarboxylase from Xanthomonas campestris pv. campestris (strain 8004).